The chain runs to 562 residues: Formate--tetrahydrofolate ligase (562 aa).

Position 70–77 (70–77 (TPAGEGKS)) interacts with ATP.

This sequence belongs to the formate--tetrahydrofolate ligase family.

It catalyses the reaction (6S)-5,6,7,8-tetrahydrofolate + formate + ATP = (6R)-10-formyltetrahydrofolate + ADP + phosphate. Its pathway is one-carbon metabolism; tetrahydrofolate interconversion. In Paenarthrobacter aurescens (strain TC1), this protein is Formate--tetrahydrofolate ligase.